An 87-amino-acid chain; its full sequence is Acyl-CoA-binding protein (87 aa).

Residue S2 is modified to N-acetylserine. The ACB domain occupies 2–87 (SQAEFDKAAE…VEDLKKKYGI (86 aa)). Position 8 is an N6-acetyllysine; alternate (K8). At K8 the chain carries N6-succinyllysine; alternate. Residue K14 participates in an acyl-CoA binding. K17 carries the N6-succinyllysine modification. The residue at position 19 (K19) is an N6-acetyllysine. The residue at position 29 (Y29) is a Phosphotyrosine. Residues 29 to 33 (YSHYK), K55, and Y74 contribute to the an acyl-CoA site. Position 55 is an N6-acetyllysine; alternate (K55). K55 is modified (N6-succinyllysine; alternate). K55 is modified (N6-(2-hydroxyisobutyryl)lysine; alternate). N6-malonyllysine; alternate is present on K55. K77 is subject to N6-acetyllysine; alternate. Residue K77 is modified to N6-succinyllysine; alternate.

It belongs to the ACBP family. Monomer.

It is found in the endoplasmic reticulum. The protein resides in the golgi apparatus. Its function is as follows. Binds medium- and long-chain acyl-CoA esters with very high affinity and may function as an intracellular carrier of acyl-CoA esters. The chain is Acyl-CoA-binding protein (DBI) from Canis lupus familiaris (Dog).